The primary structure comprises 338 residues: 3-dehydroquinate synthase (338 aa).

NAD(+) contacts are provided by residues 58 to 63, 92 to 96, 116 to 117, Lys129, and Lys138; these read DGERAK, GTTGD, and TT. Zn(2+) contacts are provided by Glu169, His229, and His245.

This sequence belongs to the sugar phosphate cyclases superfamily. Dehydroquinate synthase family. It depends on NAD(+) as a cofactor. Requires Co(2+) as cofactor. Zn(2+) serves as cofactor.

It localises to the cytoplasm. It carries out the reaction 7-phospho-2-dehydro-3-deoxy-D-arabino-heptonate = 3-dehydroquinate + phosphate. It functions in the pathway metabolic intermediate biosynthesis; chorismate biosynthesis; chorismate from D-erythrose 4-phosphate and phosphoenolpyruvate: step 2/7. Functionally, catalyzes the conversion of 3-deoxy-D-arabino-heptulosonate 7-phosphate (DAHP) to dehydroquinate (DHQ). The chain is 3-dehydroquinate synthase from Picrophilus torridus (strain ATCC 700027 / DSM 9790 / JCM 10055 / NBRC 100828 / KAW 2/3).